The primary structure comprises 474 residues: Cyclin-dependent kinase 2 homolog (474 aa).

A Protein kinase domain is found at 7–446; that stretch reads YRHVVKLGEG…AAEAVHHPYL (440 aa). Residues 13-21 and Lys36 each bind ATP; that span reads LGEGTYGMV. The residue at position 17 (Thr17) is a Phosphothreonine. A Phosphotyrosine modification is found at Tyr18. Residue Asp131 is the Proton acceptor of the active site. Residues 150–200 form a disordered region; it reads TALPSSPQQSMRVPHAGGTNGEAGRASANGNEHAPRPTAAEGSVSPWEEAA. Residue Ser230 is modified to Phosphoserine. The segment covering 334–354 has biased composition (low complexity); it reads QQLQAQQQQPQQGSSPSHSSS. Residues 334 to 356 are disordered; the sequence is QQLQAQQQQPQQGSSPSHSSSRA.

This sequence belongs to the protein kinase superfamily. CMGC Ser/Thr protein kinase family. CDC2/CDKX subfamily. As to quaternary structure, may form a complex composed of at least the catalytic subunit CRK2 and a cyclin. Mg(2+) is required as a cofactor.

It is found in the cytoplasm. The enzyme catalyses L-seryl-[protein] + ATP = O-phospho-L-seryl-[protein] + ADP + H(+). It carries out the reaction L-threonyl-[protein] + ATP = O-phospho-L-threonyl-[protein] + ADP + H(+). The catalysed reaction is [DNA-directed RNA polymerase] + ATP = phospho-[DNA-directed RNA polymerase] + ADP + H(+). Its activity is regulated as follows. Phosphorylation at Thr-17 or Tyr-18 inactivates the enzyme, while phosphorylation at Ser-230 activates it. Functionally, serine/threonine-protein kinase. Involved in the control of the cell cycle. Required for entry into S-phase and mitosis. Probable component of the kinase complex that phosphorylates the repetitive C-terminus of RNA polymerase II. The polypeptide is Cyclin-dependent kinase 2 homolog (Crithidia fasciculata).